A 200-amino-acid chain; its full sequence is MELQVVGANALTVSETTFGREFNEALIHQVVVAYAAGARQGTRAQKTRAEVSGSGKKPWRQKGTGRARAGDIKSPIWRSGGTTFAAKPQDHSQKVNKKMYRGAIKSILSELVRQDRLVVVEKFELDAPKTKVLVQKLKDLAVEDALIITASLDENLFLAARNLYKVDVRDVQGIDPVSLIAFDKVIVTVDAVKQIEEILA.

Positions 43 to 67 (RAQKTRAEVSGSGKKPWRQKGTGRA) are disordered.

The protein belongs to the universal ribosomal protein uL4 family. Part of the 50S ribosomal subunit.

One of the primary rRNA binding proteins, this protein initially binds near the 5'-end of the 23S rRNA. It is important during the early stages of 50S assembly. It makes multiple contacts with different domains of the 23S rRNA in the assembled 50S subunit and ribosome. In terms of biological role, forms part of the polypeptide exit tunnel. This Haemophilus influenzae (strain PittEE) protein is Large ribosomal subunit protein uL4.